We begin with the raw amino-acid sequence, 373 residues long: Type 2 DNA topoisomerase 6 subunit A (373 aa).

The Topo IIA-type catalytic domain occupies 15–153 (QGDTLAKERL…FHMRPEEDGA (139 aa)). Y110 (O-(5'-phospho-DNA)-tyrosine intermediate) is an active-site residue. Mg(2+) contacts are provided by E206 and D258.

The protein belongs to the TOP6A family. Homodimer. Heterotetramer of two Top6A and two Top6B chains. It depends on Mg(2+) as a cofactor.

It carries out the reaction ATP-dependent breakage, passage and rejoining of double-stranded DNA.. In terms of biological role, relaxes both positive and negative superturns and exhibits a strong decatenase activity. The protein is Type 2 DNA topoisomerase 6 subunit A of Methanosarcina acetivorans (strain ATCC 35395 / DSM 2834 / JCM 12185 / C2A).